Here is a 307-residue protein sequence, read N- to C-terminus: Cilia-and flagella-associated protein 96 (307 aa).

Disordered stretches follow at residues 73 to 102 and 218 to 279; these read YSDP…SSGE and HSQK…GPKT.

This sequence belongs to the CFAP96 family.

It is found in the cytoplasm. The protein localises to the cytoskeleton. Its subcellular location is the microtubule organizing center. It localises to the centrosome. This Xenopus laevis (African clawed frog) protein is Cilia-and flagella-associated protein 96 (cfap96.L).